The primary structure comprises 330 residues: Probable deoxyhypusine synthase (330 aa).

The active-site Nucleophile is the Lys-303.

This sequence belongs to the deoxyhypusine synthase family. The cofactor is NAD(+).

The enzyme catalyses [eIF5A protein]-L-lysine + spermidine = [eIF5A protein]-deoxyhypusine + propane-1,3-diamine. It participates in protein modification; eIF5A hypusination. Catalyzes the NAD-dependent oxidative cleavage of spermidine and the subsequent transfer of the butylamine moiety of spermidine to the epsilon-amino group of a specific lysine residue of the eIF-5A precursor protein to form the intermediate deoxyhypusine residue. In Methanocaldococcus jannaschii (strain ATCC 43067 / DSM 2661 / JAL-1 / JCM 10045 / NBRC 100440) (Methanococcus jannaschii), this protein is Probable deoxyhypusine synthase (dys).